Consider the following 500-residue polypeptide: Probable cytosol aminopeptidase (500 aa).

Residues Lys269 and Asp274 each contribute to the Mn(2+) site. Lys281 is a catalytic residue. Mn(2+) contacts are provided by Asp292, Asp351, and Glu353. The active site involves Arg355.

It belongs to the peptidase M17 family. It depends on Mn(2+) as a cofactor.

It localises to the cytoplasm. The enzyme catalyses Release of an N-terminal amino acid, Xaa-|-Yaa-, in which Xaa is preferably Leu, but may be other amino acids including Pro although not Arg or Lys, and Yaa may be Pro. Amino acid amides and methyl esters are also readily hydrolyzed, but rates on arylamides are exceedingly low.. It catalyses the reaction Release of an N-terminal amino acid, preferentially leucine, but not glutamic or aspartic acids.. Presumably involved in the processing and regular turnover of intracellular proteins. Catalyzes the removal of unsubstituted N-terminal amino acids from various peptides. The protein is Probable cytosol aminopeptidase of Acidithiobacillus ferrooxidans (strain ATCC 23270 / DSM 14882 / CIP 104768 / NCIMB 8455) (Ferrobacillus ferrooxidans (strain ATCC 23270)).